Here is a 427-residue protein sequence, read N- to C-terminus: V-type proton ATPase subunit C 2 (427 aa).

A disordered region spans residues 292-319 (HKVKVTPLGNPDRPAAGQTDRERESEGE).

It belongs to the V-ATPase C subunit family. As to quaternary structure, V-ATPase is a heteromultimeric enzyme made up of two complexes: the ATP-hydrolytic V1 complex and the proton translocation V0 complex. The V1 complex consists of three catalytic AB heterodimers that form a heterohexamer, three peripheral stalks each consisting of EG heterodimers, one central rotor including subunits D and F, and the regulatory subunits C and H. The proton translocation complex V0 consists of the proton transport subunit a, a ring of proteolipid subunits c9c'', rotary subunit d, subunits e and f, and the accessory subunits ATP6AP1/Ac45 and ATP6AP2/PRR. Kidney and placenta.

Functionally, subunit of the V1 complex of vacuolar(H+)-ATPase (V-ATPase), a multisubunit enzyme composed of a peripheral complex (V1) that hydrolyzes ATP and a membrane integral complex (V0) that translocates protons. V-ATPase is responsible for acidifying and maintaining the pH of intracellular compartments and in some cell types, is targeted to the plasma membrane, where it is responsible for acidifying the extracellular environment. Subunit C is necessary for the assembly of the catalytic sector of the enzyme and is likely to have a specific function in its catalytic activity. This is V-type proton ATPase subunit C 2 (ATP6V1C2) from Homo sapiens (Human).